The chain runs to 330 residues: Succinylglutamate desuccinylase (330 aa).

Residues His-53, Glu-56, and His-147 each coordinate Zn(2+). Residue Glu-210 is part of the active site.

This sequence belongs to the AspA/AstE family. Succinylglutamate desuccinylase subfamily. The cofactor is Zn(2+).

It catalyses the reaction N-succinyl-L-glutamate + H2O = L-glutamate + succinate. It participates in amino-acid degradation; L-arginine degradation via AST pathway; L-glutamate and succinate from L-arginine: step 5/5. Functionally, transforms N(2)-succinylglutamate into succinate and glutamate. The sequence is that of Succinylglutamate desuccinylase from Yersinia pseudotuberculosis serotype O:1b (strain IP 31758).